The sequence spans 508 residues: Histidine ammonia-lyase (508 aa).

Positions 141 to 143 (ASG) form a cross-link, 5-imidazolinone (Ala-Gly). At Ser142 the chain carries 2,3-didehydroalanine (Ser).

This sequence belongs to the PAL/histidase family. Contains an active site 4-methylidene-imidazol-5-one (MIO), which is formed autocatalytically by cyclization and dehydration of residues Ala-Ser-Gly.

It localises to the cytoplasm. The enzyme catalyses L-histidine = trans-urocanate + NH4(+). It functions in the pathway amino-acid degradation; L-histidine degradation into L-glutamate; N-formimidoyl-L-glutamate from L-histidine: step 1/3. In Geobacillus sp. (strain WCH70), this protein is Histidine ammonia-lyase.